A 264-amino-acid polypeptide reads, in one-letter code: Glutamate racemase (264 aa).

Residues 9–10 (DS) and 41–42 (YG) each bind substrate. C72 (proton donor/acceptor) is an active-site residue. 73–74 (NT) provides a ligand contact to substrate. Catalysis depends on C183, which acts as the Proton donor/acceptor. 184–185 (TH) provides a ligand contact to substrate.

This sequence belongs to the aspartate/glutamate racemases family.

It catalyses the reaction L-glutamate = D-glutamate. The protein operates within cell wall biogenesis; peptidoglycan biosynthesis. Functionally, provides the (R)-glutamate required for cell wall biosynthesis. This Geobacillus sp. (strain WCH70) protein is Glutamate racemase.